The chain runs to 399 residues: Phosphate acyltransferase (399 aa).

This sequence belongs to the PlsX family. In terms of assembly, homodimer. Probably interacts with PlsY.

The protein localises to the cytoplasm. It catalyses the reaction a fatty acyl-[ACP] + phosphate = an acyl phosphate + holo-[ACP]. The protein operates within lipid metabolism; phospholipid metabolism. In terms of biological role, catalyzes the reversible formation of acyl-phosphate (acyl-PO(4)) from acyl-[acyl-carrier-protein] (acyl-ACP). This enzyme utilizes acyl-ACP as fatty acyl donor, but not acyl-CoA. The polypeptide is Phosphate acyltransferase (Rhodobacter capsulatus (Rhodopseudomonas capsulata)).